Reading from the N-terminus, the 162-residue chain is Phosphopantetheine adenylyltransferase (162 aa).

Serine 9 is a substrate binding site. ATP contacts are provided by residues 9-10 (SF) and histidine 17. Positions 41, 73, and 87 each coordinate substrate. ATP is bound by residues 88 to 90 (GLR), glutamate 98, and 123 to 129 (CSFLSSS).

This sequence belongs to the bacterial CoaD family. As to quaternary structure, homohexamer. It depends on Mg(2+) as a cofactor.

The protein localises to the cytoplasm. It carries out the reaction (R)-4'-phosphopantetheine + ATP + H(+) = 3'-dephospho-CoA + diphosphate. Its pathway is cofactor biosynthesis; coenzyme A biosynthesis; CoA from (R)-pantothenate: step 4/5. Its function is as follows. Reversibly transfers an adenylyl group from ATP to 4'-phosphopantetheine, yielding dephospho-CoA (dPCoA) and pyrophosphate. This Natranaerobius thermophilus (strain ATCC BAA-1301 / DSM 18059 / JW/NM-WN-LF) protein is Phosphopantetheine adenylyltransferase.